We begin with the raw amino-acid sequence, 469 residues long: MAKTLYDKLWDDHVVHTEEDGTTVLYIDRQLLHEVTSPQAFEGLKLANRPVWRISANLAVSDHNVPTTDRSHGIADPVSKLQVDTLDANCDSFGITQFKMTDKRQGIVHVIGPEQGATLPGMTVVCGDSHTSTHGAFGALAHGIGTSEVEHVLATQTLLAKKSKNMLVKVEGTLPRGCTAKDIVLAIIGKIGTAGGTGYAMEFGGSAIRALSMEGRMTVCNMAIEAGARAGMVGVDDITLEYIKGRPFAPQGVEWEQAVAYWRSLHSDEGARFDHVVELRAEEIRPQVSWGTSPEMVVSIEDRVPDPDKEKDPVKRNAMERALEYMALQPNVAIGDIRIDKVFIGSCTNSRIEDMRAAAWVVQKLGKRIASNVKLAMVVPGSGLVKEQAEREGLDKIFKAAGFEWREPGCSMCLAMNADRLEPGERCASTSNRNFEGRQGAGGRTHLVSPAMAAAAALEGHFVDVRKLG.

The [4Fe-4S] cluster site is built by C347, C410, and C413.

Belongs to the aconitase/IPM isomerase family. LeuC type 1 subfamily. In terms of assembly, heterodimer of LeuC and LeuD. The cofactor is [4Fe-4S] cluster.

It carries out the reaction (2R,3S)-3-isopropylmalate = (2S)-2-isopropylmalate. The protein operates within amino-acid biosynthesis; L-leucine biosynthesis; L-leucine from 3-methyl-2-oxobutanoate: step 2/4. Catalyzes the isomerization between 2-isopropylmalate and 3-isopropylmalate, via the formation of 2-isopropylmaleate. The protein is 3-isopropylmalate dehydratase large subunit of Ralstonia nicotianae (strain ATCC BAA-1114 / GMI1000) (Ralstonia solanacearum).